The primary structure comprises 423 residues: E3 ubiquitin-protein ligase makorin-2 (423 aa).

2 consecutive C3H1-type zinc fingers follow at residues 2–29 (STKQ…HDLN) and 31–58 (SKPS…HIKP). Positions 59–90 (SSRGGGGGAPEDQAGGGGAGGGGAGIGGAGGG) are disordered. The span at 61–90 (RGGGGGAPEDQAGGGGAGGGGAGIGGAGGG) shows a compositional bias: gly residues. The segment at 162–189 (QNLPQLCPYAANGHCFYEENCTYLHGDL) adopts a C3H1-type 3 zinc-finger fold. A makorin-type Cys-His region spans residues 190–219 (CEVCGLQVLHPHDSEQRRAHEKMCLAAFEA). An RING-type zinc finger spans residues 235–289 (CSICMEVVVQKANPSDRRFGILSSCCHTFCLACIRKWRCTRTFSNTIIKSCPECR). The segment at 318–347 (GVSKKACKYFDQGRGSCPFGGKCLYLHAFP) adopts a C3H1-type 4 zinc-finger fold.

The protein resides in the cytoplasm. The protein localises to the nucleus. The enzyme catalyses S-ubiquitinyl-[E2 ubiquitin-conjugating enzyme]-L-cysteine + [acceptor protein]-L-lysine = [E2 ubiquitin-conjugating enzyme]-L-cysteine + N(6)-ubiquitinyl-[acceptor protein]-L-lysine.. Its pathway is protein modification; protein ubiquitination. Its function is as follows. E3 ubiquitin ligase catalyzing the covalent attachment of ubiquitin moieties onto substrate proteins. Inhibits neurogenesis and axis formation during embryonic development by modulating the phosphatidylinositol 3-kinase (PI3K) pathway. Acts downstream of PI3K and akt1 to up-regulate gsk3b mRNA expression. The polypeptide is E3 ubiquitin-protein ligase makorin-2 (mkrn2) (Seriola quinqueradiata (Five-ray yellowtail)).